The following is a 100-amino-acid chain: Probable DNA-binding protein HU (100 aa).

Belongs to the bacterial histone-like protein family.

In terms of biological role, histone-like DNA-binding protein which is capable of wrapping DNA to stabilize it, and thus to prevent its denaturation under extreme environmental conditions. The sequence is that of Probable DNA-binding protein HU (hup) from Chlamydia pneumoniae (Chlamydophila pneumoniae).